We begin with the raw amino-acid sequence, 638 residues long: Phosphomethylpyrimidine synthase (638 aa).

Residues Asn-236, Met-265, Tyr-294, His-330, 350–352 (SRG), 391–394 (DGLR), and Glu-430 each bind substrate. His-434 is a Zn(2+) binding site. A substrate-binding site is contributed by Tyr-457. His-498 is a Zn(2+) binding site. Positions 578, 581, and 586 each coordinate [4Fe-4S] cluster.

It belongs to the ThiC family. Homodimer. The cofactor is [4Fe-4S] cluster.

The enzyme catalyses 5-amino-1-(5-phospho-beta-D-ribosyl)imidazole + S-adenosyl-L-methionine = 4-amino-2-methyl-5-(phosphooxymethyl)pyrimidine + CO + 5'-deoxyadenosine + formate + L-methionine + 3 H(+). The protein operates within cofactor biosynthesis; thiamine diphosphate biosynthesis. Catalyzes the synthesis of the hydroxymethylpyrimidine phosphate (HMP-P) moiety of thiamine from aminoimidazole ribotide (AIR) in a radical S-adenosyl-L-methionine (SAM)-dependent reaction. The polypeptide is Phosphomethylpyrimidine synthase (Polaromonas sp. (strain JS666 / ATCC BAA-500)).